The following is a 547-amino-acid chain: MDSLTLYVTNTMMKRWFQFFKHKAYDFRWAILSGILVGTSYIPFPPWALIFCYTPLWIYVTEESSSVKKSFWAGWVTQFILTLIGFHWIAYTAHEFGQLPWAVSYLALLLFCAFMHLYIPVAVAAGTWLRLRFKLSGGQTLFTIALLHALLERTWPVIFEWHLGYTLIWSKIPMYHLADLVGFHGLSAVVLLFNAWMGYVWLKQSFVKKALSHLSLLALTFAALVGWGFWHGKAWNKFDGETKATVVQANIGNLEKIYAEQGRAYQEVITRKFLDLSFAAMQKYPQTDILIWPETAFPDYLDQHLLDRKHAQILISGLQPLSRPLITGAYSKDPKADEKQDTSTYNALFLVDPLGNNLDKPYRKTELLAFGEYLPLSEQFPFLLKLLPFVSNFGRGHGPEVMKWDTPQGSVRWGGQICYEGLYPSFTRGLAEKGADILVNVTNDSWFGKTFEPQQHLYMTLARAIEVRRPLVRSTNTGVSTAVLANGDVLQKSPLHEEWSGQFVIKYLKNAPLTFFVQWGHWDWIVILLVLGAVIGRGALNARSRRS.

The next 5 helical transmembrane spans lie at I31–F51, F71–Y91, L106–G126, L180–V200, and A210–W230. The 269-residue stretch at V247 to F515 folds into the CN hydrolase domain. The active-site Proton acceptor is the E294. Residue K364 is part of the active site. The active-site Nucleophile is the C418. Residues F515–I535 traverse the membrane as a helical segment.

This sequence belongs to the CN hydrolase family. Apolipoprotein N-acyltransferase subfamily.

It is found in the cell inner membrane. It catalyses the reaction N-terminal S-1,2-diacyl-sn-glyceryl-L-cysteinyl-[lipoprotein] + a glycerophospholipid = N-acyl-S-1,2-diacyl-sn-glyceryl-L-cysteinyl-[lipoprotein] + a 2-acyl-sn-glycero-3-phospholipid + H(+). The protein operates within protein modification; lipoprotein biosynthesis (N-acyl transfer). In terms of biological role, catalyzes the phospholipid dependent N-acylation of the N-terminal cysteine of apolipoprotein, the last step in lipoprotein maturation. This is Apolipoprotein N-acyltransferase from Bdellovibrio bacteriovorus (strain ATCC 15356 / DSM 50701 / NCIMB 9529 / HD100).